Reading from the N-terminus, the 372-residue chain is UDP-N-acetylenolpyruvoylglucosamine reductase (372 aa).

Residues 29 to 205 (VGPTARRLIT…LEVEFALDAS (177 aa)) enclose the FAD-binding PCMH-type domain. The active site involves R177. S260 (proton donor) is an active-site residue. E364 is a catalytic residue.

This sequence belongs to the MurB family. It depends on FAD as a cofactor.

It is found in the cytoplasm. It carries out the reaction UDP-N-acetyl-alpha-D-muramate + NADP(+) = UDP-N-acetyl-3-O-(1-carboxyvinyl)-alpha-D-glucosamine + NADPH + H(+). Its pathway is cell wall biogenesis; peptidoglycan biosynthesis. In terms of biological role, cell wall formation. This Mycobacterium avium (strain 104) protein is UDP-N-acetylenolpyruvoylglucosamine reductase.